The sequence spans 205 residues: MTGKFITFEGIDGAGKSTHLAWFAQQLQAKLAPLGKKVVVTREPGGTPLGERLREVLLHERMHLETEALLMFASRREHIAEVIQPALDAGDWVISDRFTDATFAYQGGGRGLAIDRLEALEHWVQQGLQPTKTILFDLAPEIAAARLADARTPDKFEAESAQFFLRTRAEYLRRAAAEPDRFVVLNANRERSDIQKDLENLLATL.

10–17 (GIDGAGKS) is a binding site for ATP.

It belongs to the thymidylate kinase family.

It carries out the reaction dTMP + ATP = dTDP + ADP. Its function is as follows. Phosphorylation of dTMP to form dTDP in both de novo and salvage pathways of dTTP synthesis. The protein is Thymidylate kinase of Ralstonia pickettii (strain 12J).